The chain runs to 436 residues: Enolase (436 aa).

Gln167 is a binding site for (2R)-2-phosphoglycerate. Glu209 serves as the catalytic Proton donor. Mg(2+) contacts are provided by Asp246, Glu291, and Asp318. Lys343, Arg372, Ser373, and Lys394 together coordinate (2R)-2-phosphoglycerate. The active-site Proton acceptor is the Lys343.

It belongs to the enolase family. Component of the RNA degradosome, a multiprotein complex involved in RNA processing and mRNA degradation. It depends on Mg(2+) as a cofactor.

It localises to the cytoplasm. The protein localises to the secreted. It is found in the cell surface. The catalysed reaction is (2R)-2-phosphoglycerate = phosphoenolpyruvate + H2O. Its pathway is carbohydrate degradation; glycolysis; pyruvate from D-glyceraldehyde 3-phosphate: step 4/5. In terms of biological role, catalyzes the reversible conversion of 2-phosphoglycerate (2-PG) into phosphoenolpyruvate (PEP). It is essential for the degradation of carbohydrates via glycolysis. In Actinobacillus pleuropneumoniae serotype 3 (strain JL03), this protein is Enolase.